The chain runs to 428 residues: Autophagy-related protein 14 (428 aa).

Residues 82 to 143 (QEAIDRTAEI…RKKQLDKVKD (62 aa)) adopt a coiled-coil conformation.

Belongs to the ATG14 family. As to quaternary structure, component of the autophagy-specific VPS34 PI3-kinase complex I.

Its subcellular location is the preautophagosomal structure membrane. It is found in the vacuole membrane. In terms of biological role, required for cytoplasm to vacuole transport (Cvt) and autophagy as a part of the autophagy-specific VPS34 PI3-kinase complex I. This complex is essential to recruit the ATG8-phosphatidylinositol conjugate and the ATG12-ATG5 conjugate to the pre-autophagosomal structure. ATG14 mediates the specific binding of the VPS34 PI3-kinase complex I to the preautophagosomal structure (PAS). Plays a crucial role in hyphal development, conidiogenesis and pathogenicity. Also required for glycogen mobilization, quantity of lipid bodies, and the turgor pressure of appressoria. This is Autophagy-related protein 14 from Pyricularia oryzae (strain 70-15 / ATCC MYA-4617 / FGSC 8958) (Rice blast fungus).